We begin with the raw amino-acid sequence, 191 residues long: Transcription factor FapR (191 aa).

Belongs to the FapR family.

In terms of biological role, transcriptional factor involved in regulation of membrane lipid biosynthesis by repressing genes involved in fatty acid and phospholipid metabolism. This chain is Transcription factor FapR, found in Oceanobacillus iheyensis (strain DSM 14371 / CIP 107618 / JCM 11309 / KCTC 3954 / HTE831).